Here is a 334-residue protein sequence, read N- to C-terminus: Cysteine and histidine-rich domain-containing protein 1 (334 aa).

Zn(2+) is bound by residues cysteine 5, cysteine 10, cysteine 24, histidine 27, cysteine 42, cysteine 43, cysteine 59, histidine 64, cysteine 156, cysteine 161, cysteine 175, histidine 178, cysteine 193, cysteine 194, cysteine 210, and histidine 215. CHORD domains follow at residues 5 to 64 (CYNR…KGQH) and 156 to 215 (CKNG…KGTH). The 90-residue stretch at 226 to 315 (VVPCRHDWHQ…AEFMTWARLE (90 aa)) folds into the CS domain.

Its function is as follows. Regulates centrosome duplication. The polypeptide is Cysteine and histidine-rich domain-containing protein 1 (chordc1) (Xenopus laevis (African clawed frog)).